We begin with the raw amino-acid sequence, 433 residues long: Tol-Pal system protein TolB (433 aa).

Positions 1-21 (MINLFRGLLVVLCFASAMVAA) are cleaved as a signal peptide.

It belongs to the TolB family. As to quaternary structure, the Tol-Pal system is composed of five core proteins: the inner membrane proteins TolA, TolQ and TolR, the periplasmic protein TolB and the outer membrane protein Pal. They form a network linking the inner and outer membranes and the peptidoglycan layer.

It localises to the periplasm. Part of the Tol-Pal system, which plays a role in outer membrane invagination during cell division and is important for maintaining outer membrane integrity. The polypeptide is Tol-Pal system protein TolB (Pseudomonas syringae pv. tomato (strain ATCC BAA-871 / DC3000)).